Reading from the N-terminus, the 87-residue chain is NADH dehydrogenase [ubiquinone] 1 alpha subcomplex subunit 4-like 2 (87 aa).

Belongs to the complex I NDUFA4 subunit family.

The protein is NADH dehydrogenase [ubiquinone] 1 alpha subcomplex subunit 4-like 2 (NDUFA4L2) of Homo sapiens (Human).